A 116-amino-acid polypeptide reads, in one-letter code: Cysteine proteinase inhibitor 1 (116 aa).

Positions 1 to 22 (MVPKPLSLLLLLLLALSAAVVG) are cleaved as a signal peptide. The region spanning 30–89 (GGWRPIENLNSAEVQDVAQFAVSEHNKQANDELQYQSVVRGYTQVVAGTNYRLVIAAKDG) is the Cystatin domain. A Secondary area of contact motif is present at residues 73 to 77 (QVVAG). Asn-109 carries N-linked (GlcNAc...) asparagine glycosylation.

This sequence belongs to the cystatin family. Phytocystatin subfamily.

It localises to the secreted. Functionally, specific inhibitor of papain family cysteine proteinases. This Actinidia chinensis var. chinensis (Chinese soft-hair kiwi) protein is Cysteine proteinase inhibitor 1.